The sequence spans 304 residues: Thyroxine 5-deiodinase (304 aa).

The disordered stretch occupies residues 1 to 22; the sequence is MPRQAASRLVVGEGEGPPGASG. Over 1 to 42 the chain is Cytoplasmic; that stretch reads MPRQAASRLVVGEGEGPPGASGPAATMLRSLLLHSLRLCAQT. The chain crosses the membrane as a helical; Signal-anchor for type II membrane protein span at residues 43–62; it reads ASCLVLFPRFLGTAFMLWLL. The Extracellular portion of the chain corresponds to 63–304; the sequence is DFLCIRKHFL…QLHGTRPRRL (242 aa). Residue Sec-170 is part of the active site. A non-standard amino acid (selenocysteine) is located at residue Sec-170.

This sequence belongs to the iodothyronine deiodinase family. In terms of assembly, monomer. Homodimer. May undergo minor heretodimerization with DIO1 and DIO2. In terms of tissue distribution, neonatal skin, placenta, skeletal muscle and cerebral cortex.

It localises to the cell membrane. The protein resides in the endosome membrane. It catalyses the reaction 3,3',5'-triiodo-L-thyronine + iodide + A + H(+) = L-thyroxine + AH2. The enzyme catalyses 3,3'-diiodo-L-thyronine + iodide + A + H(+) = 3,3',5-triiodo-L-thyronine + AH2. The catalysed reaction is 3-iodo-L-thyronine + iodide + A + H(+) = 3,5-diiodo-L-thyronine + AH2. It carries out the reaction L-thyronine + iodide + A + H(+) = 3-iodo-L-thyronine + AH2. It catalyses the reaction 3',5'-diiodo-L-thyronine + iodide + A + H(+) = 3,3',5'-triiodo-L-thyronine + AH2. The enzyme catalyses 3'-iodo-L-thyronine + iodide + A + H(+) = 3,3'-diiodo-L-thyronine + AH2. The catalysed reaction is 3,3',5'-triiodothyronamine + iodide + A + H(+) = 3,3',5,5'-tetraiodothyronamine + AH2. It carries out the reaction 3',5'-diiodothyronamine + iodide + A + H(+) = 3,3',5'-triiodothyronamine + AH2. It catalyses the reaction 3,3'-diiodothyronamine + iodide + A + H(+) = 3,3',5-triiodothyronamine + AH2. The enzyme catalyses 3-iodothyronamine + iodide + A + H(+) = 3,5-diiodothyronamine + AH2. The catalysed reaction is 3'-iodothyronamine + iodide + A + H(+) = 3,3'-diiodothyronamine + AH2. It carries out the reaction thyronamine + iodide + A + H(+) = 3-iodothyronamine + AH2. Plays a crucial role in the metabolism of thyroid hormones (TH) and has specific roles in TH activation and inactivation by deiodination. Catalyzes the deiodination of L-thyroxine (T4) to 3,3',5'-triiodothyronine (rT3), 3,5-diiodothyronine (3,5-T2) to 3-monoiodothyronine (3-T1), rT3 to 3',5'-diiodothyronine (3',5'-T2) and 3,3'-diiodothyronine (3,3'-T2) to 3'-monoiodothyronine (3'-T1) via inner-ring deiodination (IRD). Catalyzes the deiodination of 3,5,3'-triiodothyronine (T3) to 3,3'-diiodothyronine (3,3'-T2) via IRD. Catalyzes the deiodination of 3-T1 to L-thyronine (T0) via outer-ring deiodination (ORD). Catalyzes the tyrosyl ring deiodinations of T4AM (3,3',5,5'-tetraiodothyronamine), rT3AM (3,3',5'-triiodothyronamine), T3AM (3,5,3'-triiodothyronamine), 3,5-T2AM (3,5-diiodothyronamine), 3,3'-T2AM (3,3'-diiodothyronamine) and 3-T1AM (3-iodothyronamine). The polypeptide is Thyroxine 5-deiodinase (Dio3) (Rattus norvegicus (Rat)).